The sequence spans 334 residues: Transmembrane protein 41 homolog (334 aa).

An N-linked (GlcNAc...) asparagine glycan is attached at N43. Residues 47–79 (KNKNNNIDNKKNSNNNNNNNNNNNNKNSISNNN) are disordered. N83 carries N-linked (GlcNAc...) asparagine glycosylation. The next 6 membrane-spanning stretches (helical) occupy residues 97–117 (LPLW…VFLF), 156–176 (FIVI…SIPG), 192–214 (VGFP…ISYY), 246–266 (IVFL…ASPL), 269–289 (VPIH…TFLA), and 305–325 (IFDL…ILPT).

Belongs to the TMEM41 family.

It localises to the membrane. This chain is Transmembrane protein 41 homolog, found in Dictyostelium discoideum (Social amoeba).